A 380-amino-acid chain; its full sequence is Cytochrome b (380 aa).

Helical transmembrane passes span 34–54 (FGSLLGICLATQILTGLLLAA), 78–99 (WLIRNLHANGASFFFICIYLHI), 114–134 (WNTGIILLLTLMATAFVGYVL), and 179–199 (FFTLHFLLPFMIAGLTLIHLT). Heme b is bound by residues H84 and H98. Positions 183 and 197 each coordinate heme b. Residue H202 coordinates a ubiquinone. The next 4 helical transmembrane spans lie at 227–247 (TKDILGFILLLLPLTTLALFS), 289–309 (LGGVLALAASVLILFLIPLLH), 321–341 (LSQLLFWTLVANLTILTWIGS), and 348–368 (FIIIGQLASLTYFTILLILFP).

This sequence belongs to the cytochrome b family. In terms of assembly, the cytochrome bc1 complex contains 11 subunits: 3 respiratory subunits (MT-CYB, CYC1 and UQCRFS1), 2 core proteins (UQCRC1 and UQCRC2) and 6 low-molecular weight proteins (UQCRH/QCR6, UQCRB/QCR7, UQCRQ/QCR8, UQCR10/QCR9, UQCR11/QCR10 and a cleavage product of UQCRFS1). This cytochrome bc1 complex then forms a dimer. The cofactor is heme b.

The protein localises to the mitochondrion inner membrane. Component of the ubiquinol-cytochrome c reductase complex (complex III or cytochrome b-c1 complex) that is part of the mitochondrial respiratory chain. The b-c1 complex mediates electron transfer from ubiquinol to cytochrome c. Contributes to the generation of a proton gradient across the mitochondrial membrane that is then used for ATP synthesis. In Eudyptes chrysocome (Western rockhopper penguin), this protein is Cytochrome b (MT-CYB).